Here is a 637-residue protein sequence, read N- to C-terminus: 1-deoxy-D-xylulose-5-phosphate synthase (637 aa).

Residues histidine 71 and 112–114 (SHA) contribute to the thiamine diphosphate site. Aspartate 144 contacts Mg(2+). Thiamine diphosphate-binding positions include 145–146 (GA), asparagine 173, tyrosine 284, and glutamate 365. Asparagine 173 contributes to the Mg(2+) binding site.

It belongs to the transketolase family. DXPS subfamily. Homodimer. The cofactor is Mg(2+). Requires thiamine diphosphate as cofactor.

It catalyses the reaction D-glyceraldehyde 3-phosphate + pyruvate + H(+) = 1-deoxy-D-xylulose 5-phosphate + CO2. Its pathway is metabolic intermediate biosynthesis; 1-deoxy-D-xylulose 5-phosphate biosynthesis; 1-deoxy-D-xylulose 5-phosphate from D-glyceraldehyde 3-phosphate and pyruvate: step 1/1. Its function is as follows. Catalyzes the acyloin condensation reaction between C atoms 2 and 3 of pyruvate and glyceraldehyde 3-phosphate to yield 1-deoxy-D-xylulose-5-phosphate (DXP). This is 1-deoxy-D-xylulose-5-phosphate synthase from Mycolicibacterium vanbaalenii (strain DSM 7251 / JCM 13017 / BCRC 16820 / KCTC 9966 / NRRL B-24157 / PYR-1) (Mycobacterium vanbaalenii).